Consider the following 1876-residue polypeptide: Phenolphthiocerol/phthiocerol polyketide synthase subunit A (1876 aa).

Threonine 2 is modified (N-acetylthreonine). Residues 9–83 (ADLRHWLIDY…ALAAYLAAPE (75 aa)) form the Carrier 1 domain. At serine 43 the chain carries O-(pantetheine 4'-phosphoryl)serine. The region spanning 101–526 (DEPIAVVGMG…GTNAHVVIEQ (426 aa)) is the Ketosynthase family 3 (KS3) domain. Active-site for beta-ketoacyl synthase activity residues include cysteine 273, histidine 408, and histidine 448. The segment at 626–950 (SPGPGTVFVY…NLNKAHTIHP (325 aa)) is acyltransferase. Serine 720 functions as the For malonyltransferase activity in the catalytic mechanism. The interval 997 to 1112 (HTTVATVSAS…AQLSSSPSDS (116 aa)) is N-terminal hotdog fold. A PKS/mFAS DH domain is found at 997 to 1267 (HTTVATVSAS…YRALDFGLDV (271 aa)). Histidine 1027 serves as the catalytic Proton acceptor; for dehydratase activity. The tract at residues 1102–1130 (TAQLSSSPSDSASSLNEHHRANGQPPERA) is disordered. Over residues 1106–1115 (SSSPSDSASS) the composition is skewed to low complexity. The interval 1130 to 1267 (AHRDLIPDLA…YRALDFGLDV (138 aa)) is C-terminal hotdog fold. Aspartate 1186 functions as the Proton donor; for dehydratase activity in the catalytic mechanism. 1491–1551 (AAYLITGGLG…RRRIDAIRAL (61 aa)) contributes to the NADP(+) binding site. The interval 1491–1728 (AAYLITGGLG…DGYDVAQAVV (238 aa)) is beta-ketoacyl reductase. The Carrier 2 domain maps to 1759 to 1836 (EVRSELEQGL…SLASYLAKRV (78 aa)). The residue at position 1796 (serine 1796) is an O-(pantetheine 4'-phosphoryl)serine.

It depends on NADP(+) as a cofactor. Pantetheine 4'-phosphate is required as a cofactor.

The enzyme catalyses icosanoyl-[(phenol)carboxyphthiodiolenone synthase] + 2 (S)-methylmalonyl-CoA + 3 malonyl-CoA + 5 NADPH + 10 H(+) = C32-carboxyphthiodiolenone-[(phenol)carboxyphthiodiolenone synthase] + 5 CO2 + 5 NADP(+) + 5 CoA + 2 H2O. It carries out the reaction docosanoyl-[(phenol)carboxyphthiodiolenone synthase] + 2 (S)-methylmalonyl-CoA + 3 malonyl-CoA + 5 NADPH + 10 H(+) = C34-carboxyphthiodiolenone-[(phenol)carboxyphthiodiolenone synthase] + 5 CO2 + 5 NADP(+) + 5 CoA + 2 H2O. It catalyses the reaction 17-(4-hydroxyphenyl)heptadecanoyl-[(phenol)carboxyphthiodiolenone synthase] + 2 (S)-methylmalonyl-CoA + 3 malonyl-CoA + 5 NADPH + 10 H(+) = C35-(phenol)carboxyphthiodiolenone-[(phenol)carboxyphthiodiolenone synthase] + 5 CO2 + 5 NADP(+) + 5 CoA + 2 H2O. The catalysed reaction is 19-(4-hydroxyphenyl)nonadecanoyl-[(phenol)carboxyphthiodiolenone synthase] + 2 (S)-methylmalonyl-CoA + 3 malonyl-CoA + 5 NADPH + 10 H(+) = C37-(phenol)carboxyphthiodiolenone-[(phenol)carboxyphthiodiolenone synthase] + 5 CO2 + 5 NADP(+) + 5 CoA + 2 H2O. The protein operates within lipid metabolism; fatty acid biosynthesis. Its function is as follows. Part of the PpsABCDE complex involved in the biosynthesis of the lipid core common to phthiocerols and phenolphthiocerols by successive additions of malonyl-CoA or methylmalonyl-CoA extender units. PpsA can accept as substrate the activated forms of either icosanoyl (C20), docosanoyl (C22) or lignoceroyl (C24) groups from FadD26, or a (4-hydroxyphenyl)-C17 or (4-hydroxyphenyl)-C19 fatty acyl from FadD29. PpsA initiates the biosynthesis and extends its substrate using a malonyl-CoA extender unit. The PpsB and PpsC proteins add the second and third malonyl-CoA extender units. PpsD adds an (R)-methylmalonyl unit and PpsE adds a second (R)-methylmalonyl unit. The incorporation of the methylmalonyl units results in formation of two branched methyl groups in the elongated product. The polypeptide is Phenolphthiocerol/phthiocerol polyketide synthase subunit A (ppsA) (Mycobacterium tuberculosis (strain ATCC 25618 / H37Rv)).